We begin with the raw amino-acid sequence, 321 residues long: Nacrein-like protein (321 aa).

In terms of domain architecture, Alpha-carbonic anhydrase spans 1-319 (RGPKNWCKVH…NKNVIVYRNH (319 aa)). The Proton acceptor role is filled by His58.

This sequence belongs to the alpha-carbonic anhydrase family. In terms of tissue distribution, component of the organic matrix of calcified shell layers like nacre and prisms.

It localises to the secreted. This chain is Nacrein-like protein, found in Mytilus californianus (California mussel).